The following is a 169-amino-acid chain: MYTSGYANRSSLFSSTAGSIARVSSENTTAGLISEVVYREDQPMMTQLLLLPLLQQLGQQSRWQLWLTPQQKLSREWVQSAGLPLTKVMQISQLSPCHTLESMIRALRTGNYSVVIGWLADELSEEEHTRLAQAADEGNAMGFIMRPVSAHAHATRHHSGLKIHSNLYH.

Positions 106–112 (ALRTGNY) are ftsZ binding. Positions 162–169 (KIHSNLYH) are lon protease binding.

Belongs to the SulA family. In terms of assembly, interacts with FtsZ. In terms of processing, is rapidly cleaved and degraded by the Lon protease once DNA damage is repaired.

Component of the SOS system and an inhibitor of cell division. Accumulation of SulA causes rapid cessation of cell division and the appearance of long, non-septate filaments. In the presence of GTP, binds a polymerization-competent form of FtsZ in a 1:1 ratio, thus inhibiting FtsZ polymerization and therefore preventing it from participating in the assembly of the Z ring. This mechanism prevents the premature segregation of damaged DNA to daughter cells during cell division. The chain is Cell division inhibitor SulA from Citrobacter koseri (strain ATCC BAA-895 / CDC 4225-83 / SGSC4696).